The sequence spans 643 residues: Threonine--tRNA ligase (643 aa).

A TGS domain is found at methionine 1–threonine 61. A catalytic region spans residues aspartate 243 to proline 534. Residues cysteine 334, histidine 385, and histidine 511 each contribute to the Zn(2+) site.

Belongs to the class-II aminoacyl-tRNA synthetase family. Homodimer. Requires Zn(2+) as cofactor.

The protein resides in the cytoplasm. It carries out the reaction tRNA(Thr) + L-threonine + ATP = L-threonyl-tRNA(Thr) + AMP + diphosphate + H(+). Functionally, catalyzes the attachment of threonine to tRNA(Thr) in a two-step reaction: L-threonine is first activated by ATP to form Thr-AMP and then transferred to the acceptor end of tRNA(Thr). Also edits incorrectly charged L-seryl-tRNA(Thr). This chain is Threonine--tRNA ligase, found in Rhodospirillum rubrum (strain ATCC 11170 / ATH 1.1.1 / DSM 467 / LMG 4362 / NCIMB 8255 / S1).